Here is a 602-residue protein sequence, read N- to C-terminus: Bifunctional xylanase/deacetylase (602 aa).

Positions 1 to 14 (MSATLLVPSMTVKA) are cleaved as a signal peptide. The region spanning 17 to 211 (TIYNNKTGNQ…SSGSASVYKN (195 aa)) is the GH11 domain. The Nucleophile role is filled by Glu108. The active-site Proton donor is the Glu198. The segment at 216 to 240 (GGSSSSSGNQGGNQGGNTGNENAGN) is disordered. Gly residues predominate over residues 224 to 233 (NQGGNQGGNT). Residues 249–366 (DKIQCETMTK…DAYLDYFNNS (118 aa)) form the CBM6 domain. Residues 402 to 578 (KLIALTFDDG…GLKNQGYTFV (177 aa)) form the NodB homology domain.

Belongs to the glycosyl hydrolase 11 (cellulase G) family. In the later growth phases, seems to undergo a proteolytic cleavage into a 30 kDa protein possessing xylanolytic activity.

Its subcellular location is the secreted. The catalysed reaction is Endohydrolysis of (1-&gt;4)-beta-D-xylosidic linkages in xylans.. It participates in glycan degradation; xylan degradation. In terms of biological role, endo-acting xylanase which specifically cleaves internal linkages on the xylan backbone, releasing xylooligosaccharides. Is also probably able, via its C-terminal domain, to remove acetyl groups from acetylated xylan, and thus it is probably capable of hydrolyzing acetylated xylan. The sequence is that of Bifunctional xylanase/deacetylase (xyn11A) from Pseudobutyrivibrio xylanivorans.